Here is a 304-residue protein sequence, read N- to C-terminus: MSMLSPEKPSEPAKIIDGKGIARALTDQVGREVAKFVEQGNTIPGLAVVLVGNDPASEVYVKNKAIQTHRVGMRSFMHMLPQSTSQDELLDLIAQLNANPKIHGILVQLPLPAQIDPVAVTNAIAPHKDVDGLGEVNAGRLSLGIDGIVPCTPLGCLMLLQSVHKDMTGMHAVVIGASNLVGKPMAQLLLKENCTVTVAHIHTRNTKELAREADILVVATGKSELVRGDWIKPGATVIDVGITRVPAENGKTRLVGDVAFDEAFPIAGHITPVPGGVGPMTIACLLHNTLQAARATQAVADASS.

NADP(+)-binding positions include 176-178 (GAS), Ile-201, and Ile-242.

It belongs to the tetrahydrofolate dehydrogenase/cyclohydrolase family. In terms of assembly, homodimer.

The catalysed reaction is (6R)-5,10-methylene-5,6,7,8-tetrahydrofolate + NADP(+) = (6R)-5,10-methenyltetrahydrofolate + NADPH. It catalyses the reaction (6R)-5,10-methenyltetrahydrofolate + H2O = (6R)-10-formyltetrahydrofolate + H(+). It participates in one-carbon metabolism; tetrahydrofolate interconversion. In terms of biological role, catalyzes the oxidation of 5,10-methylenetetrahydrofolate to 5,10-methenyltetrahydrofolate and then the hydrolysis of 5,10-methenyltetrahydrofolate to 10-formyltetrahydrofolate. This Gluconobacter oxydans (strain 621H) (Gluconobacter suboxydans) protein is Bifunctional protein FolD.